Consider the following 342-residue polypeptide: Protein FinQ (342 aa).

The segment at residues 208-227 (RDREFNLLNAQISMVLYICS) is a DNA-binding region (H-T-H motif).

Functionally, transcriptional inhibitor of the F plasmid transfer genes. FinQ may regulate a gene or genes encoded on the IncI plasmids, and coincidentally may inhibit F transfer when coresident. This is Protein FinQ (finQ) from Escherichia coli.